The sequence spans 91 residues: Small ribosomal subunit protein uS19 (91 aa).

This sequence belongs to the universal ribosomal protein uS19 family.

Functionally, protein S19 forms a complex with S13 that binds strongly to the 16S ribosomal RNA. The polypeptide is Small ribosomal subunit protein uS19 (Trichodesmium erythraeum (strain IMS101)).